A 296-amino-acid polypeptide reads, in one-letter code: MDLVNNLNDRLLFAVPKKGRLYEKAVELLKGSDIQFHRHNRLDIALSTNLPLALVFLPAADIPRFVGEGRVALGITGIDQVREAKMDVENALDLNFGSCKLQVQVPEKGPYTDPKQLIGKSIVTSFTSLAEEYFAELEGVPVKDITTNIKFVGGSVEAACALGVADGIIDLVESGETMRAAGLKPIATVLETSASLIVSKNPSHPELVQMIKSRIEGVLAANKYVLCNYNAPRDKLDALLKITPGRRAATVSPLDDEGWCAVSSMAEKKKIAQIMDELKKEGASDILVFSISNCRV.

This sequence belongs to the ATP phosphoribosyltransferase family.

The protein resides in the cytoplasm. It carries out the reaction 1-(5-phospho-beta-D-ribosyl)-ATP + diphosphate = 5-phospho-alpha-D-ribose 1-diphosphate + ATP. The protein operates within amino-acid biosynthesis; L-histidine biosynthesis; L-histidine from 5-phospho-alpha-D-ribose 1-diphosphate: step 1/9. Catalyzes the condensation of ATP and 5-phosphoribose 1-diphosphate to form N'-(5'-phosphoribosyl)-ATP (PR-ATP). Has a crucial role in the pathway because the rate of histidine biosynthesis seems to be controlled primarily by regulation of the enzymatic activity. The polypeptide is ATP phosphoribosyltransferase (HIS1) (Yarrowia lipolytica (strain CLIB 122 / E 150) (Yeast)).